Reading from the N-terminus, the 645-residue chain is Threonine--tRNA ligase (645 aa).

Residues 1–63 (MDQIKIKFPD…ESDGDIEIVT (63 aa)) form the TGS domain. The catalytic stretch occupies residues 242-540 (DHRKIGKELE…LTEETKGAFP (299 aa)). The Zn(2+) site is built by C336, H387, and H517.

This sequence belongs to the class-II aminoacyl-tRNA synthetase family. As to quaternary structure, homodimer. It depends on Zn(2+) as a cofactor.

It is found in the cytoplasm. The catalysed reaction is tRNA(Thr) + L-threonine + ATP = L-threonyl-tRNA(Thr) + AMP + diphosphate + H(+). Catalyzes the attachment of threonine to tRNA(Thr) in a two-step reaction: L-threonine is first activated by ATP to form Thr-AMP and then transferred to the acceptor end of tRNA(Thr). Also edits incorrectly charged L-seryl-tRNA(Thr). In Staphylococcus saprophyticus subsp. saprophyticus (strain ATCC 15305 / DSM 20229 / NCIMB 8711 / NCTC 7292 / S-41), this protein is Threonine--tRNA ligase.